We begin with the raw amino-acid sequence, 202 residues long: Cyclin-U4-1 (202 aa).

This sequence belongs to the cyclin family. Cyclin U/P subfamily. As to quaternary structure, interacts with CDKA-1. In terms of tissue distribution, expressed in roots, stems and flowers. Expressed in the shoot apex, leaf primordia and young leaves.

In Arabidopsis thaliana (Mouse-ear cress), this protein is Cyclin-U4-1 (CYCU4-1).